Here is a 67-residue protein sequence, read N- to C-terminus: Small, acid-soluble spore protein 2 (67 aa).

It belongs to the alpha/beta-type SASP family.

SASP are bound to spore DNA. They are double-stranded DNA-binding proteins that cause DNA to change to an a-like conformation. They protect the DNA backbone from chemical and enzymatic cleavage and are thus involved in dormant spore's high resistance to UV light. The polypeptide is Small, acid-soluble spore protein 2 (Su-2) (Sporosarcina ureae).